The chain runs to 315 residues: Glycine--tRNA ligase alpha subunit (315 aa).

The protein belongs to the class-II aminoacyl-tRNA synthetase family. In terms of assembly, tetramer of two alpha and two beta subunits.

Its subcellular location is the cytoplasm. The enzyme catalyses tRNA(Gly) + glycine + ATP = glycyl-tRNA(Gly) + AMP + diphosphate. This chain is Glycine--tRNA ligase alpha subunit, found in Pseudomonas entomophila (strain L48).